The primary structure comprises 430 residues: Glutamyl-tRNA reductase 1 (430 aa).

Residues 49 to 52, Ser-109, 114 to 116, and Gln-120 contribute to the substrate site; these read TCNR and EGQ. Cys-50 functions as the Nucleophile in the catalytic mechanism. 189-194 contributes to the NADP(+) binding site; the sequence is GAGSMA.

The protein belongs to the glutamyl-tRNA reductase family. Homodimer.

The catalysed reaction is (S)-4-amino-5-oxopentanoate + tRNA(Glu) + NADP(+) = L-glutamyl-tRNA(Glu) + NADPH + H(+). The protein operates within porphyrin-containing compound metabolism; protoporphyrin-IX biosynthesis; 5-aminolevulinate from L-glutamyl-tRNA(Glu): step 1/2. In terms of biological role, catalyzes the NADPH-dependent reduction of glutamyl-tRNA(Glu) to glutamate 1-semialdehyde (GSA). The polypeptide is Glutamyl-tRNA reductase 1 (Nocardioides sp. (strain ATCC BAA-499 / JS614)).